A 354-amino-acid chain; its full sequence is Protein RecA (354 aa).

75-82 (GPESSGKT) provides a ligand contact to ATP.

It belongs to the RecA family.

It localises to the cytoplasm. In terms of biological role, can catalyze the hydrolysis of ATP in the presence of single-stranded DNA, the ATP-dependent uptake of single-stranded DNA by duplex DNA, and the ATP-dependent hybridization of homologous single-stranded DNAs. It interacts with LexA causing its activation and leading to its autocatalytic cleavage. The sequence is that of Protein RecA from Cupriavidus taiwanensis (strain DSM 17343 / BCRC 17206 / CCUG 44338 / CIP 107171 / LMG 19424 / R1) (Ralstonia taiwanensis (strain LMG 19424)).